Reading from the N-terminus, the 937-residue chain is Isoleucine--tRNA ligase (937 aa).

The short motif at 58 to 68 (PYANGSIHIGH) is the 'HIGH' region element. Residue E561 coordinates L-isoleucyl-5'-AMP. The 'KMSKS' region signature appears at 602 to 606 (KMSKS). ATP is bound at residue K605. Zn(2+) is bound by residues C900, C903, C920, and C923.

The protein belongs to the class-I aminoacyl-tRNA synthetase family. IleS type 1 subfamily. As to quaternary structure, monomer. Requires Zn(2+) as cofactor.

The protein resides in the cytoplasm. The catalysed reaction is tRNA(Ile) + L-isoleucine + ATP = L-isoleucyl-tRNA(Ile) + AMP + diphosphate. Its function is as follows. Catalyzes the attachment of isoleucine to tRNA(Ile). As IleRS can inadvertently accommodate and process structurally similar amino acids such as valine, to avoid such errors it has two additional distinct tRNA(Ile)-dependent editing activities. One activity is designated as 'pretransfer' editing and involves the hydrolysis of activated Val-AMP. The other activity is designated 'posttransfer' editing and involves deacylation of mischarged Val-tRNA(Ile). The protein is Isoleucine--tRNA ligase of Pectobacterium carotovorum subsp. carotovorum (strain PC1).